We begin with the raw amino-acid sequence, 385 residues long: Probable splicing factor YJU2B (385 aa).

Residues methionine 1 to tyrosine 26 are disordered. Serine 40 is subject to Phosphoserine. A coiled-coil region spans residues leucine 182–isoleucine 215. The interval phenylalanine 256 to glutamate 385 is disordered. Polar residues predominate over residues glutamine 260–serine 270. Serine 306 bears the Phosphoserine mark. 2 stretches are compositionally biased toward polar residues: residues proline 307–serine 316 and glycine 359–alanine 373.

This sequence belongs to the CWC16 family.

It localises to the nucleus. Functionally, may be involved in mRNA splicing. The sequence is that of Probable splicing factor YJU2B from Rattus norvegicus (Rat).